Consider the following 129-residue polypeptide: uncharacterized protein (129 aa).

This is an uncharacterized protein from Mycobacterium bovis (strain ATCC BAA-935 / AF2122/97).